A 102-amino-acid chain; its full sequence is uncharacterized protein (102 aa).

A disordered region spans residues 1 to 21 (MAESVNENNNNAGDSNGSGRT). Asn-16 is a glycosylation site (N-linked (GlcNAc...) asparagine). The chain crosses the membrane as a helical span at residues 24-44 (NTIVTIVVVVIVVTLIIILAT). Residues 49 to 102 (IGGSGKKVGAEEPATKLSSKSDDRNGGPNKKSPAKGSSKDDNNTEESVQSNLYG) are disordered. Residues 56–73 (VGAEEPATKLSSKSDDRN) are compositionally biased toward basic and acidic residues. Residue Asn-90 is glycosylated (N-linked (GlcNAc...) asparagine). Polar residues predominate over residues 93–102 (EESVQSNLYG).

The protein resides in the membrane. This is an uncharacterized protein from Encephalitozoon cuniculi (strain GB-M1) (Microsporidian parasite).